Here is a 238-residue protein sequence, read N- to C-terminus: Uridylate kinase (238 aa).

An ATP-binding site is contributed by 12 to 15; it reads KLSG. An involved in allosteric activation by GTP region spans residues 20-25; that stretch reads GEKGFG. Gly-54 serves as a coordination point for UMP. Gly-55 and Arg-59 together coordinate ATP. UMP contacts are provided by residues Asp-72 and 133–140; that span reads TGNPYFST. ATP-binding residues include Tyr-166 and Asp-169.

It belongs to the UMP kinase family. As to quaternary structure, homohexamer.

It localises to the cytoplasm. It carries out the reaction UMP + ATP = UDP + ADP. Its pathway is pyrimidine metabolism; CTP biosynthesis via de novo pathway; UDP from UMP (UMPK route): step 1/1. Its activity is regulated as follows. Allosterically activated by GTP. Inhibited by UTP. In terms of biological role, catalyzes the reversible phosphorylation of UMP to UDP. This Clostridium botulinum (strain Langeland / NCTC 10281 / Type F) protein is Uridylate kinase.